The primary structure comprises 120 residues: Large ribosomal subunit protein bL19 (120 aa).

This sequence belongs to the bacterial ribosomal protein bL19 family.

Functionally, this protein is located at the 30S-50S ribosomal subunit interface and may play a role in the structure and function of the aminoacyl-tRNA binding site. In Trichormus variabilis (strain ATCC 29413 / PCC 7937) (Anabaena variabilis), this protein is Large ribosomal subunit protein bL19.